Here is a 513-residue protein sequence, read N- to C-terminus: Aspartyl protease family protein 1 (513 aa).

The signal sequence occupies residues 1–21; sequence MVWYSSCRILFLGLLILLASS. Residues 104 to 445 enclose the Peptidase A1 domain; sequence HYANVTVGTP…DREKLILGWK (342 aa). Catalysis depends on residues Asp122 and Asp327. Residues 452 to 488 form a disordered region; it reads GETSARTLPSNRSSSSARPPASSFDPEATNIPSQRPN. Positions 455–474 are enriched in low complexity; the sequence is SARTLPSNRSSSSARPPASS. Residue Ser484 is the site of GPI-anchor amidated serine attachment. Positions 485–513 are cleaved as a propeptide — removed in mature form; sequence QRPNTSTTSAAYSLSISLSLFFFSILAIL.

This sequence belongs to the peptidase A1 family.

It is found in the cell membrane. Functionally, aspartyl protease. Not able to cleave BAG6. This chain is Aspartyl protease family protein 1, found in Arabidopsis thaliana (Mouse-ear cress).